Reading from the N-terminus, the 157-residue chain is Putative gamma-glutamylcyclotransferase CG2811 (157 aa).

Substrate is bound at residue 14-17 (YGTL). E89 acts as the Proton acceptor in catalysis.

The protein belongs to the gamma-glutamylcyclotransferase family.

Functionally, putative gamma-glutamylcyclotransferase. The chain is Putative gamma-glutamylcyclotransferase CG2811 from Drosophila melanogaster (Fruit fly).